Reading from the N-terminus, the 332-residue chain is L-lactate dehydrogenase C chain (332 aa).

Serine 2 carries the blocked amino end (Ser) modification. NAD(+)-binding positions include 29–57 and arginine 99; that span reads GNVGMACAISILLKGLADELALVDADENK. 3 residues coordinate substrate: arginine 106, asparagine 138, and arginine 169. Asparagine 138 serves as a coordination point for NAD(+). The active-site Proton acceptor is the histidine 193. Threonine 248 contributes to the substrate binding site.

It belongs to the LDH/MDH superfamily. LDH family. As to quaternary structure, homotetramer. Interacts with RABL2/RABL2A; binds preferentially to GTP-bound RABL2.

Its subcellular location is the cytoplasm. The catalysed reaction is (S)-lactate + NAD(+) = pyruvate + NADH + H(+). It participates in fermentation; pyruvate fermentation to lactate; (S)-lactate from pyruvate: step 1/1. In terms of biological role, possible role in sperm motility. The sequence is that of L-lactate dehydrogenase C chain (Ldhc) from Rattus norvegicus (Rat).